Reading from the N-terminus, the 895-residue chain is Protein translocase subunit SecA (895 aa).

Residues Q89, 107–111, and D502 contribute to the ATP site; that span reads GEGKT. Disordered stretches follow at residues 560-579 and 848-884; these read RRIDNQLRGRSGRQGDPGRT and AAPAAEPVEAPKEGFVEDDPSTWGNPSRNDKCPCGSG. The Zn(2+) site is built by C879, C881, C890, and H891.

The protein belongs to the SecA family. Monomer and homodimer. Part of the essential Sec protein translocation apparatus which comprises SecA, SecYEG and auxiliary proteins SecDF-YajC and YidC. Requires Zn(2+) as cofactor.

Its subcellular location is the cell inner membrane. The protein resides in the cytoplasm. It catalyses the reaction ATP + H2O + cellular proteinSide 1 = ADP + phosphate + cellular proteinSide 2.. Its function is as follows. Part of the Sec protein translocase complex. Interacts with the SecYEG preprotein conducting channel. Has a central role in coupling the hydrolysis of ATP to the transfer of proteins into and across the cell membrane, serving both as a receptor for the preprotein-SecB complex and as an ATP-driven molecular motor driving the stepwise translocation of polypeptide chains across the membrane. This Ruegeria sp. (strain TM1040) (Silicibacter sp.) protein is Protein translocase subunit SecA.